We begin with the raw amino-acid sequence, 111 residues long: Ghrelin (111 aa).

The N-terminal stretch at 1 to 26 (MRQMKRTAYIILLVCVLALWMDSVQA) is a signal peptide. The segment covering 28–37 (SSFLSPSQRP) has biased composition (polar residues). The disordered stretch occupies residues 28-53 (SSFLSPSQRPQGKDKKPPRVGRRDSD). S29 is lipidated: O-decanoyl serine; alternate. Residue S29 is the site of O-hexanoyl serine; alternate attachment. S29 carries O-octanoyl serine; alternate lipidation. Residues 38–53 (QGKDKKPPRVGRRDSD) are compositionally biased toward basic and acidic residues. At V47 the chain carries Valine amide. Positions 51-111 (DSDGILDLFM…DLLMDTPAKE (61 aa)) are cleaved as a propeptide — removed in mature form.

This sequence belongs to the motilin family. Post-translationally, O-octanoylated by GOAT/MBOAT4. O-octanoylation or O-decanoylation is essential for activity. The O-decanoylated form ghrelin-21-C10 differs in the length of the carbon backbone of the carboxylic acid forming an ester bond with Ser-29. 44% of eel ghrelin is O-decanoylated. As to expression, highest levels in stomach and anterior intestine. Lower levels in posterior intestine, kidney and brain. Low levels in heart, head kidney and middle intestine.

It is found in the secreted. Ligand for growth hormone secretagogue receptor type 1 (GHSR). Induces the release of growth hormone from the pituitary. Has an appetite-stimulating effect, induces adiposity and stimulates gastric acid secretion. Involved in growth regulation. The chain is Ghrelin (ghrl) from Anguilla japonica (Japanese eel).